The following is a 190-amino-acid chain: MSIILGIDPGSRVTGYGVIRQTGRHLEYLGSGAIRTQVEDLPTRLKRIYAGVTEIITQFQPDMFAIEQVFMAKNADSALKLGQARGTAIVAAVNHDLPVFEYAARLVKQTVVGIGSADKVQVQEMVTRILKLSDKPQTDAADALAIAITHAHSIQHSLHIANSVKMTETQEKMTALLKTRYSRGRFRLKI.

Residues D8, E67, and D139 contribute to the active site. Mg(2+) is bound by residues D8, E67, and D139.

The protein belongs to the RuvC family. Homodimer which binds Holliday junction (HJ) DNA. The HJ becomes 2-fold symmetrical on binding to RuvC with unstacked arms; it has a different conformation from HJ DNA in complex with RuvA. In the full resolvosome a probable DNA-RuvA(4)-RuvB(12)-RuvC(2) complex forms which resolves the HJ. It depends on Mg(2+) as a cofactor.

It localises to the cytoplasm. The catalysed reaction is Endonucleolytic cleavage at a junction such as a reciprocal single-stranded crossover between two homologous DNA duplexes (Holliday junction).. Its function is as follows. The RuvA-RuvB-RuvC complex processes Holliday junction (HJ) DNA during genetic recombination and DNA repair. Endonuclease that resolves HJ intermediates. Cleaves cruciform DNA by making single-stranded nicks across the HJ at symmetrical positions within the homologous arms, yielding a 5'-phosphate and a 3'-hydroxyl group; requires a central core of homology in the junction. The consensus cleavage sequence is 5'-(A/T)TT(C/G)-3'. Cleavage occurs on the 3'-side of the TT dinucleotide at the point of strand exchange. HJ branch migration catalyzed by RuvA-RuvB allows RuvC to scan DNA until it finds its consensus sequence, where it cleaves and resolves the cruciform DNA. The chain is Crossover junction endodeoxyribonuclease RuvC from Haemophilus influenzae (strain PittEE).